The following is a 257-amino-acid chain: High-affinity copper transporter ctrC (257 aa).

Transmembrane regions (helical) follow at residues 79–99 and 202–222; these read RGMF…LEFL and YFNG…SFIF.

It belongs to the copper transporter (Ctr) (TC 1.A.56) family. SLC31A subfamily.

Its subcellular location is the cell membrane. The enzyme catalyses Cu(2+)(in) = Cu(2+)(out). High-affinity copper transporter of plasma membrane that mediates copper uptake under low copper conditions. The mechanism driving the transmembrane transport of copper has still to be determined. Acts as a potential virulence factor. The protein is High-affinity copper transporter ctrC of Aspergillus fumigatus (strain ATCC MYA-4609 / CBS 101355 / FGSC A1100 / Af293) (Neosartorya fumigata).